Here is a 490-residue protein sequence, read N- to C-terminus: GTPase Der (490 aa).

EngA-type G domains follow at residues 3-166 and 203-376; these read PVVA…MEDL and IKLA…DSST. Residues 9 to 16, 56 to 60, 118 to 121, 209 to 216, 256 to 260, and 321 to 324 each bind GTP; these read GRPNVGKS, DTGGI, NKTD, DTAGV, and NKWD. Positions 377–461 constitute a KH-like domain; the sequence is RRVGTSMLTR…PIRIQFKEGE (85 aa).

Belongs to the TRAFAC class TrmE-Era-EngA-EngB-Septin-like GTPase superfamily. EngA (Der) GTPase family. Associates with the 50S ribosomal subunit.

Functionally, GTPase that plays an essential role in the late steps of ribosome biogenesis. The chain is GTPase Der from Escherichia coli O81 (strain ED1a).